Reading from the N-terminus, the 610-residue chain is Glutamine--fructose-6-phosphate aminotransferase [isomerizing] (610 aa).

The active-site Nucleophile; for GATase activity is the Cys2. The region spanning 2–217 is the Glutamine amidotransferase type-2 domain; that stretch reads CGIVGYVGQK…DKEFVVLTND (216 aa). SIS domains follow at residues 284–424 and 453–600; these read ITKE…LKGS and LIKE…VDKP. Residue Lys605 is the For Fru-6P isomerization activity of the active site.

As to quaternary structure, homodimer.

It is found in the cytoplasm. It catalyses the reaction D-fructose 6-phosphate + L-glutamine = D-glucosamine 6-phosphate + L-glutamate. In terms of biological role, catalyzes the first step in hexosamine metabolism, converting fructose-6P into glucosamine-6P using glutamine as a nitrogen source. This chain is Glutamine--fructose-6-phosphate aminotransferase [isomerizing], found in Clostridium perfringens (strain 13 / Type A).